A 418-amino-acid chain; its full sequence is Tyrosine--tRNA ligase 1 (418 aa).

Tyrosine 34 is an L-tyrosine binding site. Residues 39 to 48 (PTADSLHLGH) carry the 'HIGH' region motif. L-tyrosine-binding residues include tyrosine 169 and glutamine 173. The short motif at 229–233 (KFGKS) is the 'KMSKS' region element. Lysine 232 contacts ATP. Residues 352 to 418 (LNIVELLVNA…GKKKNFVLTY (67 aa)) form the S4 RNA-binding domain.

This sequence belongs to the class-I aminoacyl-tRNA synthetase family. TyrS type 1 subfamily. As to quaternary structure, homodimer.

It localises to the cytoplasm. The enzyme catalyses tRNA(Tyr) + L-tyrosine + ATP = L-tyrosyl-tRNA(Tyr) + AMP + diphosphate + H(+). Functionally, catalyzes the attachment of tyrosine to tRNA(Tyr) in a two-step reaction: tyrosine is first activated by ATP to form Tyr-AMP and then transferred to the acceptor end of tRNA(Tyr). The polypeptide is Tyrosine--tRNA ligase 1 (Streptococcus thermophilus (strain CNRZ 1066)).